Consider the following 337-residue polypeptide: Ketol-acid reductoisomerase (NADP(+)) (337 aa).

Residues valine 3 to threonine 183 enclose the KARI N-terminal Rossmann domain. Residues tyrosine 26 to glutamine 29, serine 52, serine 54, and aspartate 84 to glutamine 87 each bind NADP(+). Histidine 109 is a catalytic residue. Glycine 135 is a binding site for NADP(+). One can recognise a KARI C-terminal knotted domain in the interval threonine 184–valine 329. Residues aspartate 192, glutamate 196, glutamate 228, and glutamate 232 each contribute to the Mg(2+) site. Serine 253 contributes to the substrate binding site.

This sequence belongs to the ketol-acid reductoisomerase family. Mg(2+) serves as cofactor.

It carries out the reaction (2R)-2,3-dihydroxy-3-methylbutanoate + NADP(+) = (2S)-2-acetolactate + NADPH + H(+). The enzyme catalyses (2R,3R)-2,3-dihydroxy-3-methylpentanoate + NADP(+) = (S)-2-ethyl-2-hydroxy-3-oxobutanoate + NADPH + H(+). It functions in the pathway amino-acid biosynthesis; L-isoleucine biosynthesis; L-isoleucine from 2-oxobutanoate: step 2/4. It participates in amino-acid biosynthesis; L-valine biosynthesis; L-valine from pyruvate: step 2/4. Its function is as follows. Involved in the biosynthesis of branched-chain amino acids (BCAA). Catalyzes an alkyl-migration followed by a ketol-acid reduction of (S)-2-acetolactate (S2AL) to yield (R)-2,3-dihydroxy-isovalerate. In the isomerase reaction, S2AL is rearranged via a Mg-dependent methyl migration to produce 3-hydroxy-3-methyl-2-ketobutyrate (HMKB). In the reductase reaction, this 2-ketoacid undergoes a metal-dependent reduction by NADPH to yield (R)-2,3-dihydroxy-isovalerate. This is Ketol-acid reductoisomerase (NADP(+)) from Salinispora tropica (strain ATCC BAA-916 / DSM 44818 / JCM 13857 / NBRC 105044 / CNB-440).